Reading from the N-terminus, the 851-residue chain is M-phase phosphoprotein 8 (851 aa).

The segment at 21 to 54 (NIGRSPEVEGGGAAGEEKDAATKGTVAVGDSEED) is disordered. Residues serine 51, serine 85, and serine 136 each carry the phosphoserine modification. In terms of domain architecture, Chromo spans 59–118 (FEVERILDMKCEGGKNLYKVRWKGYTSDDDTWEPEVHLEDCKEVLLEFRKKVAENKAKAV). Residues 80-87 (WKGYTSDD) form a histone H3K9me3 binding region. The tract at residues 133–174 (EADSDIDQQGDTKEDTSPRKKKKKIKYKEDKSPDDLRKKRAK) is disordered. Threonine 144 carries the phosphothreonine modification. Residues serine 149 and serine 164 each carry the phosphoserine; by CDK1 modification. A compositionally biased stretch (basic and acidic residues) spans 159-169 (YKEDKSPDDLR). 4 positions are modified to phosphoserine: serine 188, serine 263, serine 267, and serine 274. The segment at 240–302 (REDVKDNRKT…KTGQDTVQES (63 aa)) is disordered. A compositionally biased stretch (acidic residues) spans 269–278 (TLEDESEDFL). Over residues 279–295 (SDNKEKQNVRTAKDKTG) the composition is skewed to basic and acidic residues. Serine 313 carries the phosphoserine modification. The disordered stretch occupies residues 315 to 428 (EEAGTRVRRK…DKEEKARKEP (114 aa)). Residues 329 to 364 (RKFEEPKEIKKLENTNNFLERKMIPKKQRNQDKGRS) show a composition bias toward basic and acidic residues. Position 379 is a phosphothreonine; by CDK1 (threonine 379). Residues serine 386 and serine 394 each carry the phosphoserine modification. The segment covering 401-428 (EKERKNEPKEKYQKRYDFDKEEKARKEP) has biased composition (basic and acidic residues). Threonine 447 is modified (phosphothreonine). ANK repeat units lie at residues 591–620 (TGMT…KVNG), 624–653 (NGTT…FVNV), 657–686 (NGET…DCNI), and 690–719 (HQNS…TLSR).

In terms of assembly, homodimer. Interacts (via chromo domain) with histone H3K9me3. Has the highest affinity for H3K9me3, and lesser affinity for H3K9me2 and H3K9me1. Component of the HUSH complex; at least composed of TASOR, PPHLN1 and MPHOSPH8. Interacts with DNMT3, EHMT1 and SETDB1. Interacts with MORC2; the interaction associateS MORC2 with the HUSH complex which recruits MORC2 to heterochromatic loci. Interacts with ZNF638; leading to recruitment of the HUSH complex to unintegrated retroviral DNA. Interacts with TASOR. Phosphorylated in M (mitotic) phase. Phosphorylation by CDK1 promotes dissociation from chromatin.

It is found in the nucleus. The protein resides in the chromosome. In terms of biological role, heterochromatin component that specifically recognizes and binds methylated 'Lys-9' of histone H3 (H3K9me) and promotes recruitment of proteins that mediate epigenetic repression. Mediates recruitment of the HUSH complex to H3K9me3 sites: the HUSH complex is recruited to genomic loci rich in H3K9me3 and is required to maintain transcriptional silencing by promoting recruitment of SETDB1, a histone methyltransferase that mediates further deposition of H3K9me3, as well as MORC2. Binds H3K9me and promotes DNA methylation by recruiting DNMT3A to target CpG sites; these can be situated within the coding region of the gene. Mediates down-regulation of CDH1 expression. Also represses L1 retrotransposons in collaboration with MORC2 and, probably, SETDB1, the silencing is dependent of repressive epigenetic modifications, such as H3K9me3 mark. Silencing events often occur within introns of transcriptionally active genes, and lead to the down-regulation of host gene expression. The HUSH complex is also involved in the silencing of unintegrated retroviral DNA by being recruited by ZNF638: some part of the retroviral DNA formed immediately after infection remains unintegrated in the host genome and is transcriptionally repressed. The chain is M-phase phosphoprotein 8 from Rattus norvegicus (Rat).